Here is a 98-residue protein sequence, read N- to C-terminus: Small ribosomal subunit protein bS6c (98 aa).

It belongs to the bacterial ribosomal protein bS6 family.

The protein resides in the plastid. Its subcellular location is the chloroplast. Binds together with bS18 to 16S ribosomal RNA. This Phaeodactylum tricornutum (strain CCAP 1055/1) protein is Small ribosomal subunit protein bS6c.